The primary structure comprises 164 residues: Photosystem II extrinsic protein V (164 aa).

The signal sequence occupies residues 1–27; that stretch reads MNRISIYRIKVLAFLFAVSTYVYPASS. 4 residues coordinate heme c: cysteine 64, cysteine 67, histidine 68, and histidine 119.

This sequence belongs to the cytochrome c family. PsbV subfamily. As to quaternary structure, PSII is composed of 1 copy each of membrane proteins PsbA, PsbB, PsbC, PsbD, PsbE, PsbF, PsbH, PsbI, PsbJ, PsbK, PsbL, PsbM, PsbT, PsbY, PsbZ, Psb30/Ycf12, at least 3 peripheral proteins of the oxygen-evolving complex and a large number of cofactors. It forms dimeric complexes. The extrinsic subunits in red algae are PsbO (OEC33), PsbQ', cytochrome c-550 and PsbU. Requires heme c as cofactor.

Its subcellular location is the plastid. It is found in the chloroplast thylakoid membrane. Functionally, one of the extrinsic, lumenal subunits of photosystem II (PSII). PSII is a light-driven water plastoquinone oxidoreductase, using light energy to abstract electrons from H(2)O, generating a proton gradient subsequently used for ATP formation. The extrinsic proteins stabilize the structure of photosystem II oxygen-evolving complex (OEC), the ion environment of oxygen evolution and protect the OEC against heat-induced inactivation. The sequence is that of Photosystem II extrinsic protein V from Cyanidium caldarium (Red alga).